Reading from the N-terminus, the 314-residue chain is Oxaloacetate tautomerase FAHD2A, mitochondrial (314 aa).

The N-terminal 84 residues, methionine 1–leucine 84, are a transit peptide targeting the mitochondrion. Glutamate 159, glutamate 161, and aspartate 190 together coordinate Mg(2+).

Belongs to the FAH family. It depends on Mg(2+) as a cofactor. The cofactor is Mn(2+).

It localises to the mitochondrion. It carries out the reaction oxaloacetate = enol-oxaloacetate. In terms of biological role, tautomerase that converts enol-oxaloacetate, a strong inhibitor of succinate dehydrogenase, to the physiological keto form of oxaloacetate. It is thereby required to maximize aerobic respiration efficiency by preventing succinate dehydrogenase inhibition. The protein is Oxaloacetate tautomerase FAHD2A, mitochondrial of Homo sapiens (Human).